Consider the following 492-residue polypeptide: Gamma-aminobutyric acid receptor subunit alpha-3 (492 aa).

The first 28 residues, 1–28, serve as a signal peptide directing secretion; sequence MIITQTSHCYMTSLGILFLINILPGTTG. The segment at 28-54 is disordered; it reads GQGESRRQEPGDFVKQDIGGLSPKHAP. Residues 29 to 274 lie on the Extracellular side of the membrane; the sequence is QGESRRQEPG…MTTHFHLKRK (246 aa). Basic and acidic residues predominate over residues 31–42; that stretch reads ESRRQEPGDFVK. Residue asparagine 63 is glycosylated (N-linked (GlcNAc...) asparagine). Arginine 119 contributes to the 4-aminobutanoate binding site. Residues asparagine 163 and asparagine 176 are each glycosylated (N-linked (GlcNAc...) asparagine). A 4-aminobutanoate-binding site is contributed by threonine 182. The cysteines at positions 191 and 205 are disulfide-linked. Asparagine 228 is a glycosylation site (N-linked (GlcNAc...) asparagine). The chain crosses the membrane as a helical span at residues 275-295; sequence IGYFVIQTYLPCIMTVILSQV. Residues 296–305 lie on the Cytoplasmic side of the membrane; the sequence is SFWLNRESVP. A helical membrane pass occupies residues 306–325; the sequence is ARTVFGVTTVLTMTTLSISA. Topologically, residues 326-336 are extracellular; the sequence is RNSLPKVAYAT. A helical transmembrane segment spans residues 337 to 357; it reads AMDWFIAVCYAFVFSALIEFA. Residues 358–457 are Cytoplasmic-facing; sequence TVNYFTKRSW…TYNSVSKVDK (100 aa). Serine 426 is modified (phosphoserine). The residue at position 427 (threonine 427) is a Phosphothreonine. Phosphoserine occurs at positions 433 and 442. The helical transmembrane segment at 458-478 threads the bilayer; it reads ISRIIFPVLFAIFNLVYWATY. Over 479-492 the chain is Extracellular; that stretch reads VNRESAIKGMIRKQ.

Belongs to the ligand-gated ion channel (TC 1.A.9) family. Gamma-aminobutyric acid receptor (TC 1.A.9.5) subfamily. GABRA3 sub-subfamily. In terms of assembly, heteropentamer, formed by a combination of alpha (GABRA1-6), beta (GABRB1-3), gamma (GABRG1-3), delta (GABRD), epsilon (GABRE), rho (GABRR1-3), pi (GABRP) and theta (GABRQ) chains, each subunit exhibiting distinct physiological and pharmacological properties. Binds UBQLN1. Interacts with GPHN.

The protein localises to the postsynaptic cell membrane. The protein resides in the cell membrane. It carries out the reaction chloride(in) = chloride(out). With respect to regulation, potentiated by etomidate, propofol, pregnanolone and flurazepam. Its function is as follows. Alpha subunit of the heteropentameric ligand-gated chloride channel gated by gamma-aminobutyric acid (GABA), a major inhibitory neurotransmitter in the brain. GABA-gated chloride channels, also named GABA(A) receptors (GABAAR), consist of five subunits arranged around a central pore and contain GABA active binding site(s) located at the alpha and beta subunit interface(s). When activated by GABA, GABAARs selectively allow the flow of chloride anions across the cell membrane down their electrochemical gradient. Chloride influx into the postsynaptic neuron following GABAAR opening decreases the neuron ability to generate a new action potential, thereby reducing nerve transmission. The sequence is that of Gamma-aminobutyric acid receptor subunit alpha-3 from Homo sapiens (Human).